The sequence spans 159 residues: Small ribosomal subunit protein uS9 (159 aa).

Belongs to the universal ribosomal protein uS9 family.

The sequence is that of Small ribosomal subunit protein uS9 from Beijerinckia indica subsp. indica (strain ATCC 9039 / DSM 1715 / NCIMB 8712).